The following is a 433-amino-acid chain: 3-phosphoshikimate 1-carboxyvinyltransferase (433 aa).

3-phosphoshikimate contacts are provided by Lys-15, Ser-16, and Arg-20. Lys-15 serves as a coordination point for phosphoenolpyruvate. Gly-96 and Arg-124 together coordinate phosphoenolpyruvate. Residues Ser-169, Gln-171, Ser-195, Asp-318, and Lys-345 each coordinate 3-phosphoshikimate. Residue Gln-171 participates in phosphoenolpyruvate binding. Asp-318 (proton acceptor) is an active-site residue. Positions 349 and 393 each coordinate phosphoenolpyruvate.

It belongs to the EPSP synthase family. In terms of assembly, monomer.

The protein localises to the cytoplasm. The enzyme catalyses 3-phosphoshikimate + phosphoenolpyruvate = 5-O-(1-carboxyvinyl)-3-phosphoshikimate + phosphate. It participates in metabolic intermediate biosynthesis; chorismate biosynthesis; chorismate from D-erythrose 4-phosphate and phosphoenolpyruvate: step 6/7. Functionally, catalyzes the transfer of the enolpyruvyl moiety of phosphoenolpyruvate (PEP) to the 5-hydroxyl of shikimate-3-phosphate (S3P) to produce enolpyruvyl shikimate-3-phosphate and inorganic phosphate. This Chlorobium luteolum (strain DSM 273 / BCRC 81028 / 2530) (Pelodictyon luteolum) protein is 3-phosphoshikimate 1-carboxyvinyltransferase.